The sequence spans 434 residues: F-box/kelch-repeat protein At1g55270 (434 aa).

The region spanning 76–122 (PPLLPGLPDDLAVACLIRVPRAEHRKLRLVCKRWYRLASGNFFYSQR) is the F-box domain. Kelch repeat units follow at residues 129-178 (EEWV…VLSG), 180-227 (HLYL…VINN), 229-276 (LYVA…VYDK), 278-321 (WFLK…SLNG), and 325-371 (GLDC…LHNK).

This chain is F-box/kelch-repeat protein At1g55270, found in Arabidopsis thaliana (Mouse-ear cress).